A 299-amino-acid polypeptide reads, in one-letter code: GTPase Era (299 aa).

One can recognise an Era-type G domain in the interval 5–172 (KSGFVSIIGR…IDVLKSFLPE (168 aa)). The interval 13–20 (GRPNVGKS) is G1. Position 13–20 (13–20 (GRPNVGKS)) interacts with GTP. Positions 39–43 (QTTRN) are G2. Positions 60 to 63 (DTPG) are G3. GTP is bound by residues 60-64 (DTPGI) and 122-125 (NKID). The interval 122 to 125 (NKID) is G4. Residues 151–153 (ISA) form a G5 region. The region spanning 203–280 (TSEEIPHAIG…YLELWVKVQR (78 aa)) is the KH type-2 domain.

The protein belongs to the TRAFAC class TrmE-Era-EngA-EngB-Septin-like GTPase superfamily. Era GTPase family. In terms of assembly, monomer.

The protein localises to the cytoplasm. It is found in the cell membrane. Functionally, an essential GTPase that binds both GDP and GTP, with rapid nucleotide exchange. Plays a role in 16S rRNA processing and 30S ribosomal subunit biogenesis and possibly also in cell cycle regulation and energy metabolism. In Staphylococcus epidermidis (strain ATCC 35984 / DSM 28319 / BCRC 17069 / CCUG 31568 / BM 3577 / RP62A), this protein is GTPase Era.